A 690-amino-acid chain; its full sequence is CREB-H transcription factor homolog let-607 (690 aa).

3 disordered regions span residues 87–118, 166–192, and 205–253; these read NDNC…SSGG, SAVH…SNGL, and PASI…KYPP. Low complexity-rich tracts occupy residues 100 to 116, 170 to 181, and 213 to 236; these read SLPI…YHSS, QNQQQQQRRLNQ, and PSSS…SSST. In terms of domain architecture, bZIP spans 284–347; it reads DLKRIRRKIR…QSVISQLKKL (64 aa). The segment at 286-321 is basic motif; that stretch reads KRIRRKIRNKRSAQTSRKRKQDYIEQLEDRVSESTK. Residues 295–350 are a coiled coil; the sequence is KRSAQTSRKRKQDYIEQLEDRVSESTKENQALKQQIERLSSENQSVISQLKKLQAQ. The interval 326–333 is leucine-zipper; sequence LKQQIERL. Polar residues predominate over residues 451-464; it reads HNNSKYPASGNQNH. Disordered stretches follow at residues 451 to 495 and 509 to 536; these read HNNS…SMYR and GARK…ATSP. Composition is skewed to low complexity over residues 480–492 and 514–535; these read QPKQ…HQPS and SSTS…SATS.

This sequence belongs to the bZIP family.

The protein resides in the nucleus. Functionally, probable transcription factor, required during migration of the gonadal distal tip cells (DTC). Probably regulates cell adhesion of DTCs via modulation of expression of genes involved in integrin-mediated adhesion, including tln-1, src-1, and integrin pat-2. Modulates expression of genes involved in protein trafficking during embryogenesis, including emo-1, sec-61, calu-1, sec-24.1, enpl-1, sar-1 and tfg-1. The sequence is that of CREB-H transcription factor homolog let-607 from Caenorhabditis elegans.